A 467-amino-acid polypeptide reads, in one-letter code: Cytochrome P450 monooxygenase azaI (467 aa).

Positions 1 to 28 (MESLAQLPGIFLPLAGCVLALSLSALLA) are cleaved as a signal peptide. Cys411 is a binding site for heme.

The protein belongs to the cytochrome P450 family. It depends on heme as a cofactor.

The protein operates within secondary metabolite biosynthesis. Functionally, cytochrome P450 monooxygenase; part of the gene cluster that mediates the biosynthesis of azaphilones, a class of fungal metabolites characterized by a highly oxygenated pyrano-quinone bicyclic core and exhibiting a broad range of bioactivities. In the first step, the non-reducing polyketide synthase azaA forms the hexaketide precursor from successive condensations of five malonyl-CoA units, presumably with a simple acetyl-CoA starter unit. The reactive polyketide chain then undergoes a PT-mediated C2-C7 cyclization to afford the aromatic ring and is eventually released as an aldehyde through the R-domain. The putative ketoreductase azaE is proposed to catalyze the reduction of the terminal ketone resulting in the early culture product FK17-P2a. The monooxygenase azaH was demonstrated to be the only enzyme required to convert FK17-P2a to azanigerone E. AzaH first hydroxylates the benzaldehyde intermediate FK17-P2a at C4, which triggers the formation of the pyran-ring to afford azanigerone E. In parallel, the 2,4-dimethylhexanoyl chain is synthesized by the HR-PKS azaB and is proposed to be transferred to the C4-hydroxyl of azanigerone E by the acyltransferase azaD directly from the ACP domain of azaB. Alternatively, the 2,4-dimethyl-hexanoyl chain may be offloaded from the HR-PKS as a carboxylic acid and converted to an acyl-CoA by azaF. The resulting acyl-CoA molecule could then be taken up as a substrate by AzaD to form azanigerone B. To yield the carboxylic acid substituent in azanigerone A, the hydroxypropyl side chain of azanigerone B would need to undergo a C-C oxidative cleavage catalyzed by cytochrome P450 AzaI. AzaI is proposed to act on a vicinal diol that leads to a C-C bond scission either through an alkoxyradical intermediate or a peroxy complex. In the biosynthesis of azanigerone A, azanigerone B first undergoes hydroxylation at C10, possibly catalyzed by one of the two FAD-dependent monooxygenases encoded in the cluster, azaG or azaL, resulting in the vicinal diol azanigerone C. Oxidative cleavage of azanigerone C by azaI would yield the corresponding aldehyde derivative of azanigerone A. Finally, the dehydrogenase azaJ is proposed to convert the aldehyde functional group into the carboxylic acid, completing the conversion from azanigerone B to azanigerone A. Alternatively, the oxidation of aldehyde to carboxylic acid may be catalyzed by the same P450 enzyme azaI via consecutive oxidation or by endogenous alcohol dehydrogenase. This is Cytochrome P450 monooxygenase azaI from Aspergillus niger (strain ATCC 1015 / CBS 113.46 / FGSC A1144 / LSHB Ac4 / NCTC 3858a / NRRL 328 / USDA 3528.7).